The chain runs to 317 residues: Universal stress protein Mb2019 (317 aa).

ATP contacts are provided by residues Gly13, Gly128–Ala134, Ser142–Val143, Gly175, Asp208, Gly277–Gly283, and Ser291–Ser293.

It belongs to the universal stress protein A family.

In Mycobacterium bovis (strain ATCC BAA-935 / AF2122/97), this protein is Universal stress protein Mb2019.